We begin with the raw amino-acid sequence, 369 residues long: S-adenosylmethionine:tRNA ribosyltransferase-isomerase (369 aa).

Belongs to the QueA family. As to quaternary structure, monomer.

It is found in the cytoplasm. It carries out the reaction 7-aminomethyl-7-carbaguanosine(34) in tRNA + S-adenosyl-L-methionine = epoxyqueuosine(34) in tRNA + adenine + L-methionine + 2 H(+). Its pathway is tRNA modification; tRNA-queuosine biosynthesis. Transfers and isomerizes the ribose moiety from AdoMet to the 7-aminomethyl group of 7-deazaguanine (preQ1-tRNA) to give epoxyqueuosine (oQ-tRNA). This is S-adenosylmethionine:tRNA ribosyltransferase-isomerase from Synechococcus sp. (strain CC9311).